The primary structure comprises 603 residues: Bifunctional 3-dehydroquinate dehydratase/shikimate dehydrogenase, chloroplastic (603 aa).

The segment covering 1–10 (MAASSTNARL) has biased composition (polar residues). The tract at residues 1-22 (MAASSTNARLTNPPRLLSKPRL) is disordered. The transit peptide at 1–66 (MAASSTNARL…VVFSDQRRRR (66 aa)) directs the protein to the chloroplast. Positions 13–22 (PPRLLSKPRL) are enriched in low complexity. The segment at 96-313 (ICAPVMADSI…QPTIKDLLDL (218 aa)) is 3-dehydroquinate dehydratase. Residues Glu124, Arg126, and Arg155 each coordinate 3-dehydroshikimate. His214 serves as the catalytic Proton acceptor; for 3-dehydroquinate dehydratase activity. Positions 241, 279, 300, and 304 each coordinate 3-dehydroshikimate. The active-site Schiff-base intermediate with substrate; for 3-dehydroquinate dehydratase activity is the Lys241. The interval 328–558 (IIGKPVSHSK…VYTPRITRLL (231 aa)) is shikimate dehydrogenase. Residues Ser336, Ser338, Thr381, Lys385, Asn406, and Asp423 each coordinate shikimate. Lys385 (for shikimate dehydrogenase activity) is an active-site residue. Asp423 acts as the For shikimate dehydrogenase activity in catalysis. NADP(+) is bound by residues Ala461, Gly463, Ala464, Asn483, Thr485, Arg488, Met525, and Ala548. Tyr550 contributes to the shikimate binding site. An NADP(+)-binding site is contributed by Gly571. Shikimate-binding residues include Gln578 and Gln582.

This sequence in the N-terminal section; belongs to the type-I 3-dehydroquinase family. The protein in the C-terminal section; belongs to the shikimate dehydrogenase family. In terms of assembly, monomer.

It localises to the plastid. The protein resides in the chloroplast. The enzyme catalyses 3-dehydroquinate = 3-dehydroshikimate + H2O. The catalysed reaction is shikimate + NADP(+) = 3-dehydroshikimate + NADPH + H(+). It participates in metabolic intermediate biosynthesis; chorismate biosynthesis; chorismate from D-erythrose 4-phosphate and phosphoenolpyruvate: step 3/7. It functions in the pathway metabolic intermediate biosynthesis; chorismate biosynthesis; chorismate from D-erythrose 4-phosphate and phosphoenolpyruvate: step 4/7. Its function is as follows. Bifunctional dehydroquinate dehydratase-shikimate dehydrogenase enzyme that catalyzes two steps in the chorismate biosynthesis pathway. The chain is Bifunctional 3-dehydroquinate dehydratase/shikimate dehydrogenase, chloroplastic from Arabidopsis thaliana (Mouse-ear cress).